A 250-amino-acid chain; its full sequence is Peptidyl-tRNA hydrolase (250 aa).

A tRNA-binding site is contributed by Tyr14. Catalysis depends on His19, which acts as the Proton acceptor. Residues Phe64, Asn66, and Asn112 each coordinate tRNA. Positions 192–250 (MGDGNQRPGGVKTDPAQLEKAPPKAQSHIRQARQNQKKPNIPESGPMAEMLKKLLGKKD) are disordered. The span at 219-229 (HIRQARQNQKK) shows a compositional bias: polar residues. A compositionally biased stretch (basic and acidic residues) spans 241–250 (MLKKLLGKKD).

Belongs to the PTH family. As to quaternary structure, monomer.

It localises to the cytoplasm. It catalyses the reaction an N-acyl-L-alpha-aminoacyl-tRNA + H2O = an N-acyl-L-amino acid + a tRNA + H(+). Its function is as follows. Hydrolyzes ribosome-free peptidyl-tRNAs (with 1 or more amino acids incorporated), which drop off the ribosome during protein synthesis, or as a result of ribosome stalling. Catalyzes the release of premature peptidyl moieties from peptidyl-tRNA molecules trapped in stalled 50S ribosomal subunits, and thus maintains levels of free tRNAs and 50S ribosomes. This is Peptidyl-tRNA hydrolase from Brucella abortus (strain 2308).